The sequence spans 245 residues: 14-3-3 protein theta (245 aa).

An N-acetylmethionine modification is found at Met1. The residue at position 3 (Lys3) is an N6-acetyllysine. An N6-acetyllysine; alternate modification is found at Lys49. Lys49 participates in a covalent cross-link: Glycyl lysine isopeptide (Lys-Gly) (interchain with G-Cter in SUMO2); alternate. Position 68 is an N6-acetyllysine (Lys68). Tyr82 is modified (3'-nitrotyrosine). Position 92 is a phosphoserine (Ser92). Tyr104 bears the 3'-nitrotyrosine mark. Lys115 carries the post-translational modification N6-acetyllysine. A Phosphoserine; by CK1 modification is found at Ser232.

The protein belongs to the 14-3-3 family. As to quaternary structure, homodimer. Interacts with CDKN1B ('Thr-198' phosphorylated form); the interaction translocates CDKN1B to the cytoplasm. Interacts with SSH1. Interacts with GAB2. Interacts with RGS7 (phosphorylated form). Interacts with CDK16. Interacts with the 'Ser-241' phosphorylated form of PDPK1. Interacts with the 'Thr-369' phosphorylated form of DAPK2. Interacts with PI4KB, TBC1D22A and TBC1D22B. Interacts with SLITRK1. Interacts with RIPOR2. Interacts with INAVA; the interaction increases upon PRR (pattern recognition receptor) stimulation and is required for cellular signaling pathway activation and cytokine secretion. Interacts with MARK2, MARK3 and MARK4. Interacts with MEFV.

It is found in the cytoplasm. Adapter protein implicated in the regulation of a large spectrum of both general and specialized signaling pathways. Binds to a large number of partners, usually by recognition of a phosphoserine or phosphothreonine motif. Binding generally results in the modulation of the activity of the binding partner. Negatively regulates the kinase activity of PDPK1. This Mus musculus (Mouse) protein is 14-3-3 protein theta (Ywhaq).